Consider the following 626-residue polypeptide: Chaperone protein HtpG (626 aa).

Residues 1–341 (MAKKEFKAES…SEDLSLNISR (341 aa)) form an a; substrate-binding region. Residues 342-552 (EMLQHDRQLK…DGEVTIEMEK (211 aa)) are b. The interval 553–626 (ILNAMPDSQN…FTNNICKVMV (74 aa)) is c.

This sequence belongs to the heat shock protein 90 family. Homodimer.

The protein resides in the cytoplasm. In terms of biological role, molecular chaperone. Has ATPase activity. The polypeptide is Chaperone protein HtpG (Bacillus subtilis (strain 168)).